The chain runs to 359 residues: MATLRVSLSLWNLHAGSRGAGRVYFRARARPRPGDLFQPLPGVCGAGTPCRGLCSEAESGSPKIKKPTFMDEEVQSILIKMTGLDLLKIFKPAVQETKPPTYKLMTQAQLEEATRQAIEAAKVRLKMPPVLEERTPINDVLAEDKILEGTETGKYVFTDISYSIPHRERFIVVREPSGTLRKASWEERDRMIQIYFPKEGRRVLTPVIFREENLQTMYSQDRHVDVLNLCVAQFEPDSADYIKVHHQTYEDIDKYGKYDLLRSTRHFGGMAWYFVNKKKIDGLLIDQIQRDLVDDAASLVQLYHILHPDGQSAQEAKEQAAEGLQLIKVFAKTEAQKGAYIELTLQAYQEAFISSSAAS.

This sequence belongs to the mitochondrion-specific ribosomal protein mS22 family. As to quaternary structure, component of the mitochondrial ribosome small subunit (28S) which comprises a 12S rRNA and about 30 distinct proteins.

It is found in the mitochondrion. In Bos taurus (Bovine), this protein is Small ribosomal subunit protein mS22 (MRPS22).